The following is a 178-amino-acid chain: ATP-dependent protease subunit HslV (178 aa).

Thr-7 is an active-site residue. 3 residues coordinate Na(+): Gly-162, Cys-165, and Thr-168.

It belongs to the peptidase T1B family. HslV subfamily. A double ring-shaped homohexamer of HslV is capped on each side by a ring-shaped HslU homohexamer. The assembly of the HslU/HslV complex is dependent on binding of ATP.

The protein resides in the cytoplasm. It catalyses the reaction ATP-dependent cleavage of peptide bonds with broad specificity.. Allosterically activated by HslU binding. Protease subunit of a proteasome-like degradation complex believed to be a general protein degrading machinery. The protein is ATP-dependent protease subunit HslV of Azoarcus sp. (strain BH72).